A 246-amino-acid polypeptide reads, in one-letter code: 1-(5-phosphoribosyl)-5-[(5-phosphoribosylamino)methylideneamino] imidazole-4-carboxamide isomerase (246 aa).

The active-site Proton acceptor is Asp7. Asp129 serves as the catalytic Proton donor.

This sequence belongs to the HisA/HisF family.

Its subcellular location is the cytoplasm. The enzyme catalyses 1-(5-phospho-beta-D-ribosyl)-5-[(5-phospho-beta-D-ribosylamino)methylideneamino]imidazole-4-carboxamide = 5-[(5-phospho-1-deoxy-D-ribulos-1-ylimino)methylamino]-1-(5-phospho-beta-D-ribosyl)imidazole-4-carboxamide. The protein operates within amino-acid biosynthesis; L-histidine biosynthesis; L-histidine from 5-phospho-alpha-D-ribose 1-diphosphate: step 4/9. The chain is 1-(5-phosphoribosyl)-5-[(5-phosphoribosylamino)methylideneamino] imidazole-4-carboxamide isomerase from Shewanella sediminis (strain HAW-EB3).